We begin with the raw amino-acid sequence, 352 residues long: Uroporphyrinogen decarboxylase (352 aa).

Substrate is bound by residues 26 to 30, D76, Y153, S208, and H323; that span reads RQAGR.

This sequence belongs to the uroporphyrinogen decarboxylase family. In terms of assembly, homodimer.

The protein resides in the cytoplasm. The catalysed reaction is uroporphyrinogen III + 4 H(+) = coproporphyrinogen III + 4 CO2. It participates in porphyrin-containing compound metabolism; protoporphyrin-IX biosynthesis; coproporphyrinogen-III from 5-aminolevulinate: step 4/4. Functionally, catalyzes the decarboxylation of four acetate groups of uroporphyrinogen-III to yield coproporphyrinogen-III. The chain is Uroporphyrinogen decarboxylase from Synechococcus sp. (strain CC9605).